Consider the following 673-residue polypeptide: UvrABC system protein B (673 aa).

In terms of domain architecture, Helicase ATP-binding spans 26 to 414 (EGLEDGLAHQ…GGDVVDQVVR (389 aa)). 39-46 (GVTGSGKT) serves as a coordination point for ATP. The Beta-hairpin signature appears at 92–115 (YYDYYQPEAYVPSSDTFIEKDASV). Positions 431–597 (QVDDLLSEIR…GLNKKVVDIL (167 aa)) constitute a Helicase C-terminal domain. The 36-residue stretch at 633-668 (LQKIHELEGLMMQHAQNLEFEEAAQIRDQLHQLREL) folds into the UVR domain.

Belongs to the UvrB family. As to quaternary structure, forms a heterotetramer with UvrA during the search for lesions. Interacts with UvrC in an incision complex.

The protein localises to the cytoplasm. In terms of biological role, the UvrABC repair system catalyzes the recognition and processing of DNA lesions. A damage recognition complex composed of 2 UvrA and 2 UvrB subunits scans DNA for abnormalities. Upon binding of the UvrA(2)B(2) complex to a putative damaged site, the DNA wraps around one UvrB monomer. DNA wrap is dependent on ATP binding by UvrB and probably causes local melting of the DNA helix, facilitating insertion of UvrB beta-hairpin between the DNA strands. Then UvrB probes one DNA strand for the presence of a lesion. If a lesion is found the UvrA subunits dissociate and the UvrB-DNA preincision complex is formed. This complex is subsequently bound by UvrC and the second UvrB is released. If no lesion is found, the DNA wraps around the other UvrB subunit that will check the other stand for damage. In Shigella dysenteriae serotype 1 (strain Sd197), this protein is UvrABC system protein B.